Here is a 492-residue protein sequence, read N- to C-terminus: Catalase isozyme 2 (492 aa).

Active-site residues include His65 and Asn138. Tyr348 is a binding site for heme.

Belongs to the catalase family. As to quaternary structure, homotetramer. Heme is required as a cofactor.

The protein resides in the peroxisome. The enzyme catalyses 2 H2O2 = O2 + 2 H2O. In terms of biological role, occurs in almost all aerobically respiring organisms and serves to protect cells from the toxic effects of hydrogen peroxide. This Solanum lycopersicum (Tomato) protein is Catalase isozyme 2 (CAT2).